The following is a 180-amino-acid chain: CASP-like protein 2A3 (180 aa).

Residues 1–13 (MELIYGSTMRKKW) lie on the Cytoplasmic side of the membrane. The helical transmembrane segment at 14–34 (IEPALRFLPVGLCISALALML) threads the bilayer. The Extracellular portion of the chain corresponds to 35-55 (KSKEGNENGILEYKHVGAFRY). A helical membrane pass occupies residues 56–76 (LAYANGICAAYSVLSTFNSVV). Residues 77–85 (PRSCSLSRA) lie on the Cytoplasmic side of the membrane. Residues 86 to 106 (WFVFVFDQAFTYLMLGAGAVV) traverse the membrane as a helical segment. Topologically, residues 107–135 (TEVLYLAYKGDEKITWFEICPYYGRFCNR) are extracellular. Residues 136–156 (VAASLVISFLALLCFIPLSLI) form a helical membrane-spanning segment. Residues 157-180 (SAYRVFSKYDPPSLCKKDQITSQS) lie on the Cytoplasmic side of the membrane.

Belongs to the Casparian strip membrane proteins (CASP) family. As to quaternary structure, homodimer and heterodimers.

The protein localises to the cell membrane. This is CASP-like protein 2A3 from Picea sitchensis (Sitka spruce).